Consider the following 702-residue polypeptide: Methionine--tRNA ligase (702 aa).

The 'HIGH' region motif lies at 23-33 (PYANGPLHLGH). Zn(2+) is bound by residues cysteine 154, cysteine 157, cysteine 167, and cysteine 170. The 'KMSKS' region motif lies at 341–345 (KMSKS). Lysine 344 provides a ligand contact to ATP. The tract at residues 562-593 (LAPPPASAKQQNASMSNTAPPPTAEEPETTAP) is disordered. The segment covering 569-578 (AKQQNASMSN) has biased composition (polar residues). Residues 599 to 702 (DFAKLDLRIG…SSAQPGMPVR (104 aa)) form the tRNA-binding domain.

Belongs to the class-I aminoacyl-tRNA synthetase family. MetG type 1 subfamily. As to quaternary structure, homodimer. The cofactor is Zn(2+).

Its subcellular location is the cytoplasm. The enzyme catalyses tRNA(Met) + L-methionine + ATP = L-methionyl-tRNA(Met) + AMP + diphosphate. Is required not only for elongation of protein synthesis but also for the initiation of all mRNA translation through initiator tRNA(fMet) aminoacylation. This chain is Methionine--tRNA ligase, found in Xylella fastidiosa (strain M12).